Here is a 303-residue protein sequence, read N- to C-terminus: D-alanine--D-alanine ligase (303 aa).

The ATP-grasp domain maps to 102–298; that stretch reads RILLAAAGLP…YPELCDWMVR (197 aa). 128 to 181 contacts ATP; the sequence is PLPAPYVIKPVAEGSSVGVEIVRTGDNRRAEIARTWRFGKEALVESFIPGRELT. Positions 251, 265, and 267 each coordinate Mg(2+).

This sequence belongs to the D-alanine--D-alanine ligase family. Requires Mg(2+) as cofactor. Mn(2+) is required as a cofactor.

The protein resides in the cytoplasm. It catalyses the reaction 2 D-alanine + ATP = D-alanyl-D-alanine + ADP + phosphate + H(+). It participates in cell wall biogenesis; peptidoglycan biosynthesis. Its function is as follows. Cell wall formation. The chain is D-alanine--D-alanine ligase from Gluconobacter oxydans (strain 621H) (Gluconobacter suboxydans).